Reading from the N-terminus, the 348-residue chain is 4-hydroxy-2-oxovalerate aldolase 2 (348 aa).

The Pyruvate carboxyltransferase domain occupies 5–256 (LQICDSTLRD…EARIKLFDAL (252 aa)). Residue 13–14 (RD) participates in substrate binding. D14 provides a ligand contact to Mn(2+). Catalysis depends on H17, which acts as the Proton acceptor. Substrate-binding residues include S168 and H195. Positions 195 and 197 each coordinate Mn(2+).

The protein belongs to the 4-hydroxy-2-oxovalerate aldolase family.

The enzyme catalyses (S)-4-hydroxy-2-oxopentanoate = acetaldehyde + pyruvate. This chain is 4-hydroxy-2-oxovalerate aldolase 2, found in Salinispora arenicola (strain CNS-205).